Consider the following 534-residue polypeptide: Capsid scaffolding protein (534 aa).

Active-site charge relay system residues include His46, Ser114, and His134. The interval 253 to 272 (EDIISIPKSAFLSMLQSSID) is interaction with pAP. A Nuclear localization signal motif is present at residues 336 to 342 (RTGKRKR). Disordered stretches follow at residues 337-356 (TGKR…PGEE) and 466-524 (GAPP…KIRK). Over residues 479–491 (QSIQQQAPETTHT) the composition is skewed to polar residues. Residues 514–534 (SRSSPKSKIRKMFCEELLNKQ) form an interaction with major capsid protein region.

Belongs to the herpesviridae capsid scaffolding protein family. In terms of assembly, homomultimer. Interacts with major capsid protein. Exists in a monomer-dimer equilibrium with the dimer being the active species. In terms of processing, capsid scaffolding protein is cleaved by assemblin after formation of the spherical procapsid. As a result, the capsid obtains its mature, icosahedral shape. Cleavages occur at two or more sites: release (R-site) and maturation (M-site).

Its subcellular location is the host cytoplasm. The protein localises to the host nucleus. The enzyme catalyses Cleaves -Ala-|-Ser- and -Ala-|-Ala- bonds in the scaffold protein.. Functionally, acts as a scaffold protein by binding major capsid protein in the cytoplasm, inducing the nuclear localization of both proteins. Multimerizes in the nucleus such as major capsid protein forms the icosahedral T=16 capsid. Autocatalytic cleavage releases the assembly protein, and subsequently abolishes interaction with major capsid protein. Cleavages products are evicted from the capsid before or during DNA packaging. Its function is as follows. Protease that plays an essential role in virion assembly within the nucleus. Catalyzes the cleavage of the assembly protein after formation of the spherical procapsid. By that cleavage, the capsid matures and gains its icosahedral shape. The cleavage sites seem to include -Ala-Ser-, -Ala-Ala-, as well as Ala-Thr bonds. Assemblin and cleavages products are evicted from the capsid before or during DNA packaging. Plays a major role in capsid assembly. Acts as a scaffold protein by binding major capsid protein. Multimerizes in the nucleus such as major capsid protein forms the icosahedral T=16 capsid. Cleaved by assemblin after capsid completion. The cleavages products are evicted from the capsid before or during DNA packaging. The protein is Capsid scaffolding protein (ORF17) of Human herpesvirus 8 type P (isolate GK18) (HHV-8).